Consider the following 187-residue polypeptide: Small ribosomal subunit protein uS4 (187 aa).

An S4 RNA-binding domain is found at 105 to 174 (RRLQTLVFRK…DNHPERAKIV (70 aa)).

Belongs to the universal ribosomal protein uS4 family. Part of the 30S ribosomal subunit. Contacts protein S5. The interaction surface between S4 and S5 is involved in control of translational fidelity.

Functionally, one of the primary rRNA binding proteins, it binds directly to 16S rRNA where it nucleates assembly of the body of the 30S subunit. Its function is as follows. With S5 and S12 plays an important role in translational accuracy. The sequence is that of Small ribosomal subunit protein uS4 from Methanocaldococcus jannaschii (strain ATCC 43067 / DSM 2661 / JAL-1 / JCM 10045 / NBRC 100440) (Methanococcus jannaschii).